We begin with the raw amino-acid sequence, 1291 residues long: Histone-lysine N-methyltransferase SETDB1 (1291 aa).

Positions 18 to 64 form a coiled coil; the sequence is ESEEIAELQQAVVEELGISMEELRHFIDEELEKMDCVQQRKKQLAEL. Residues 108-147 form a disordered region; it reads RDSSSEDESSRPTEIIEIPDEDDDVLSIDSGDAGSRTPKD. 2 positions are modified to phosphoserine: Ser112 and Ser117. Residue Thr120 is modified to Phosphothreonine. Positions 124 to 133 are enriched in acidic residues; the sequence is EIPDEDDDVL. Residue Lys182 forms a Glycyl lysine isopeptide (Lys-Gly) (interchain with G-Cter in SUMO2); alternate linkage. A Glycyl lysine isopeptide (Lys-Gly) (interchain with G-Cter in ubiquitin); alternate cross-link involves residue Lys182. Tudor domains follow at residues 257 to 320 and 347 to 403; these read KLYV…LKKT and LLKS…SMKT. Residues 404–545 are disordered; sequence SSASALEKKQ…APAPSALPAP (142 aa). The span at 433 to 444 shows a compositional bias: polar residues; it reads QYTQDLTGTGTQ. The span at 448–468 shows a compositional bias: pro residues; that stretch reads VEPPQPTAPPAPPFPPAPPLS. Residues 477–515 show a composition bias toward polar residues; the sequence is ESQLAQSRKQVAKKSTSFRPGSVGSGHSSPTSPALSENV. Low complexity predominate over residues 528 to 539; the sequence is SPLGSTASAPAP. Residues 594 to 665 form the MBD domain; that stretch reads YRGKNPLLVP…EMFCLDPYVL (72 aa). The 74-residue stretch at 727–800 folds into the Pre-SET domain; the sequence is VGCDCKDGCR…MCTNRLVQHG (74 aa). Residues Cys729, Cys731, Cys735, Cys741, Cys743, Cys781, Cys785, Cys787, and Cys792 each coordinate Zn(2+). Residues 803–1266 enclose the SET domain; that stretch reads VRLQLFKTQN…AGTELTWDYN (464 aa). S-adenosyl-L-methionine contacts are provided by residues 813–815, Asp851, and Tyr853; that span reads KGW. Residue Lys867 forms a Glycyl lysine isopeptide (Lys-Gly) (interchain with G-Cter in ubiquitin) linkage. The tract at residues 868–1160 is disordered; that stretch reads EGYESDAPCS…MTGPMKRQVA (293 aa). Positions 896–907 are enriched in acidic residues; the sequence is EDPEESNDDSSD. Residues 951 to 963 show a composition bias toward pro residues; it reads DLGPPHIPVPPSI. At Ser1025 the chain carries Phosphoserine. Residues 1031 to 1050 show a composition bias toward basic and acidic residues; sequence IKDEGDIKQAKKEDTDDRNK. Lys1032 is covalently cross-linked (Glycyl lysine isopeptide (Lys-Gly) (interchain with G-Cter in SUMO2); alternate). Residue Lys1032 forms a Glycyl lysine isopeptide (Lys-Gly) (interchain with G-Cter in SUMO1); alternate linkage. Residue Lys1038 forms a Glycyl lysine isopeptide (Lys-Gly) (interchain with G-Cter in SUMO2) linkage. Residues 1052–1063 show a composition bias toward polar residues; that stretch reads SVVTESSRNYGY. Ser1066 bears the Phosphoserine mark. Lys1069 participates in a covalent cross-link: Glycyl lysine isopeptide (Lys-Gly) (interchain with G-Cter in SUMO2). A compositionally biased stretch (low complexity) spans 1100-1115; it reads LTLSSSTESEGESGTS. Residues 1116 to 1140 are compositionally biased toward polar residues; the sequence is RKPTAGQTSATAVDSDDIQTISSGS. Lys1149 participates in a covalent cross-link: Glycyl lysine isopeptide (Lys-Gly) (interchain with G-Cter in SUMO2). N6,N6,N6-trimethyllysine; alternate occurs at positions 1170 and 1178. An N6,N6-dimethyllysine; alternate mark is found at Lys1170 and Lys1178. Residues Arg1220 and 1223–1224 contribute to the S-adenosyl-L-methionine site; that span reads NH. Residues Cys1226, Cys1279, Cys1281, and Cys1286 each contribute to the Zn(2+) site. The region spanning 1275–1291 is the Post-SET domain; it reads KELLCCCGAIECRGRLL.

This sequence belongs to the class V-like SAM-binding methyltransferase superfamily. Histone-lysine methyltransferase family. Suvar3-9 subfamily. As to quaternary structure, part of a complex containing at least CDYL, REST, WIZ, SETDB1, EHMT1 and EHMT2. Forms a complex with ATRX, TRIM28 and ZNF274. Probably part of a corepressor complex containing ZNF304, TRIM28, SETDB1 and DNMT1. Interacts with TRIM28/TIF1B. Interacts with ATF7IP and ATF7IP2; the interaction with ATF7IP protects SETDB1 from proteasomal degradation and is required to stimulate histone methyltransferase activity and facilitate the conversion of dimethylated to trimethylated H3 'Lys-9'. Interacts with CBX1 and CBX5. Interacts with DNMT3A and DNMT3B. Interacts with SUMO2. Interacts with MPHOSPH8. Interacts with ERG. Interacts with HDAC1, HDAC2, SIN3A and SIN3B. Interacts with ATRX. Interacts with RESF1. Interacts with ZNF638. Interacts with TASOR. Interacts with ZNF263; recruited to the SIX3 promoter along with other proteins involved in chromatin modification and transcriptional corepression where it contributes to transcriptional repression. Interacts with PHF13; the interaction probably enhances SETDB1 chromatin-associated levels and activity. Interacts with VRK1. In terms of processing, degraded by the proteasome, shielded by interaction with ATF7IP. Monoubiquitinated at Lys-867 by E2 enzymes of the UBE2E family. The conjugated-Ub is protected from deubiquitination by the SET domain. Monoubiquitination at Lys-867 is required for catalytic activity, H3K9 methylation and endogenous retrovirus silencing. Widely expressed. High expression in testis.

The protein resides in the nucleus. It is found in the cytoplasm. The protein localises to the chromosome. It catalyses the reaction N(6),N(6)-dimethyl-L-lysyl(9)-[histone H3] + S-adenosyl-L-methionine = N(6),N(6),N(6)-trimethyl-L-lysyl(9)-[histone H3] + S-adenosyl-L-homocysteine + H(+). Histone methyltransferase that specifically trimethylates 'Lys-9' of histone H3. H3 'Lys-9' trimethylation represents a specific tag for epigenetic transcriptional repression by recruiting HP1 (CBX1, CBX3 and/or CBX5) proteins to methylated histones. Mainly functions in euchromatin regions, thereby playing a central role in the silencing of euchromatic genes. H3 'Lys-9' trimethylation is coordinated with DNA methylation. Required for HUSH-mediated heterochromatin formation and gene silencing. Forms a complex with MBD1 and ATF7IP that represses transcription and couples DNA methylation and histone 'Lys-9' trimethylation. Its activity is dependent on MBD1 and is heritably maintained through DNA replication by being recruited by CAF-1. SETDB1 is targeted to histone H3 by TRIM28/TIF1B, a factor recruited by KRAB zinc-finger proteins. Probably forms a corepressor complex required for activated KRAS-mediated promoter hypermethylation and transcriptional silencing of tumor suppressor genes (TSGs) or other tumor-related genes in colorectal cancer (CRC) cells. Required to maintain a transcriptionally repressive state of genes in undifferentiated embryonic stem cells (ESCs). In ESCs, in collaboration with TRIM28, is also required for H3K9me3 and silencing of endogenous and introduced retroviruses in a DNA-methylation independent-pathway. Associates at promoter regions of tumor suppressor genes (TSGs) leading to their gene silencing. The SETDB1-TRIM28-ZNF274 complex may play a role in recruiting ATRX to the 3'-exons of zinc-finger coding genes with atypical chromatin signatures to establish or maintain/protect H3K9me3 at these transcriptionally active regions. This is Histone-lysine N-methyltransferase SETDB1 from Homo sapiens (Human).